Here is a 580-residue protein sequence, read N- to C-terminus: Sensor histidine kinase YvrG (580 aa).

Topologically, residues 1–6 (MRLRWK) are cytoplasmic. A helical transmembrane segment spans residues 7–27 (FLFHFFGQMLIVILLLTVMLV). Over 28 to 261 (ASFFYLDARF…KSFLKVVLKA (234 aa)) the chain is Extracellular. Residues 262 to 282 (MFLVMAVLFMYIIWMTVWYMF) form a helical membrane-spanning segment. Residues 283–580 (RFGLPIFHTI…TVITILFKKQ (298 aa)) lie on the Cytoplasmic side of the membrane. The Histidine kinase domain occupies 363–580 (GLSHDLKTPL…TVITILFKKQ (218 aa)). A Phosphohistidine; by autocatalysis modification is found at His-366.

The protein localises to the cell membrane. The enzyme catalyses ATP + protein L-histidine = ADP + protein N-phospho-L-histidine.. Its function is as follows. Member of the two-component regulatory system YvrG/YvrH that positively regulates 7 transcriptional units (wprA, wapA-yxxG, dltABCDE, sunA, sunT-bdbA-yolJ-bdbB, sigO-rsoA, and sigX-rsiX), and negatively regulates the lytABC operon. Probably activates YvrH by phosphorylation. The polypeptide is Sensor histidine kinase YvrG (yvrG) (Bacillus subtilis (strain 168)).